The chain runs to 589 residues: Serine/threonine-protein kinase STE7 homolog (589 aa).

The segment covering 1-18 (MTRTTRIDTQEATKHKDL) has biased composition (basic and acidic residues). Disordered stretches follow at residues 1-162 (MTRT…DPDN) and 185-232 (RQHY…PASS). The span at 24 to 33 (PLSLSSNPNP) shows a compositional bias: low complexity. The span at 57 to 69 (VKSTSGSLRSSDM) shows a compositional bias: polar residues. The segment covering 92–121 (PTASSSATSTPTSNITGSSSASSIQFAQKS) has biased composition (low complexity). Composition is skewed to polar residues over residues 127 to 136 (IVSQTLSRPS) and 144 to 162 (SGYS…DPDN). Over residues 185-203 (RQHYQNSHHHLPTTNRKRQ) the composition is skewed to basic residues. A compositionally biased stretch (low complexity) spans 206–220 (ISSISPTKSSAASSP). In terms of domain architecture, Protein kinase spans 249–565 (LLTLKQLGSG…QLLEDKEHFF (317 aa)). Residues 255–263 (LGSGNSGSV) and Lys-278 each bind ATP. Residue Asp-374 is the Proton acceptor of the active site. Ser-402 is subject to Phosphoserine. At Thr-408 the chain carries Phosphothreonine. The interval 473–499 (IAAERNGQNSPSRSRKNKQKGNGYNSY) is disordered.

This sequence belongs to the protein kinase superfamily. STE Ser/Thr protein kinase family. MAP kinase kinase subfamily.

It carries out the reaction L-seryl-[protein] + ATP = O-phospho-L-seryl-[protein] + ADP + H(+). It catalyses the reaction L-threonyl-[protein] + ATP = O-phospho-L-threonyl-[protein] + ADP + H(+). The catalysed reaction is L-tyrosyl-[protein] + ATP = O-phospho-L-tyrosyl-[protein] + ADP + H(+). The polypeptide is Serine/threonine-protein kinase STE7 homolog (HST7) (Candida albicans (strain WO-1) (Yeast)).